Reading from the N-terminus, the 453-residue chain is Protein amnionless (453 aa).

Positions 1–19 are cleaved as a signal peptide; that stretch reads MGVLGRVLLWLQLCALTQA. Residues 20-357 lie on the Extracellular side of the membrane; it reads VSKLWVPNTD…ESGAHVWGSS (338 aa). Asn-35 carries an N-linked (GlcNAc...) asparagine glycan. 6 disulfide bridges follow: Cys-43/Cys-96, Cys-137/Cys-213, Cys-205/Cys-211, Cys-223/Cys-249, Cys-234/Cys-250, and Cys-239/Cys-253. The interval 67-87 is interaction with CUBN; that stretch reads SDMLLPLDGELVLASGAGFGV. One can recognise a VWFC domain in the interval 202-254; it reads PEDCADPSGCVCGNAEAQPWICAALLQPLGGRCPQAACHSALRPQGQCCDLCG. Residues 358–378 traverse the membrane as a helical segment; it reads AAGLAGGVAAAVLLALLVLLV. Topologically, residues 379–453 are cytoplasmic; that stretch reads APPLLRRAGR…PLFAGAEAEA (75 aa).

As to quaternary structure, interacts (via extracellular region) with CUBN/cubilin, giving rise to a huge complex containing one AMN chain and three CUBN chains. Post-translationally, N-glycosylated. A soluble form arises by proteolytic removal of the membrane anchor. In terms of tissue distribution, detected in proximal tubules in the kidney cortex (at protein level). Long isoforms are highly expressed in small intestine, colon and kidney (renal proximal tubule epithelial cells). Shorter isoforms are detected at lower levels in testis, thymus and peripheral blood leukocytes.

It localises to the apical cell membrane. It is found in the cell membrane. Its subcellular location is the endosome membrane. The protein localises to the membrane. The protein resides in the coated pit. It localises to the secreted. Functionally, membrane-bound component of the endocytic receptor formed by AMN and CUBN. Required for normal CUBN glycosylation and trafficking to the cell surface. The complex formed by AMN and CUBN is required for efficient absorption of vitamin B12. Required for normal CUBN-mediated protein transport in the kidney. The polypeptide is Protein amnionless (AMN) (Homo sapiens (Human)).